The sequence spans 694 residues: Elongation factor G (694 aa).

A tr-type G domain is found at 6–288 (KLYRNIGIAA…GVIEYLPSPT (283 aa)). GTP contacts are provided by residues 15 to 22 (AHVDAGKT), 86 to 90 (DTPGH), and 140 to 143 (NKMD).

This sequence belongs to the TRAFAC class translation factor GTPase superfamily. Classic translation factor GTPase family. EF-G/EF-2 subfamily.

Its subcellular location is the cytoplasm. Catalyzes the GTP-dependent ribosomal translocation step during translation elongation. During this step, the ribosome changes from the pre-translocational (PRE) to the post-translocational (POST) state as the newly formed A-site-bound peptidyl-tRNA and P-site-bound deacylated tRNA move to the P and E sites, respectively. Catalyzes the coordinated movement of the two tRNA molecules, the mRNA and conformational changes in the ribosome. In Legionella pneumophila subsp. pneumophila (strain Philadelphia 1 / ATCC 33152 / DSM 7513), this protein is Elongation factor G.